The sequence spans 142 residues: Hemoglobin subunit alpha-A (142 aa).

The 141-residue stretch at 2–142 (VLSGSDKTNV…VGNVLTAKYR (141 aa)) folds into the Globin domain. O2 is bound at residue histidine 59. Histidine 88 is a binding site for heme b.

It belongs to the globin family. Heterotetramer of two alpha chains and two beta chains. As to expression, red blood cells.

Its function is as follows. Involved in oxygen transport from the lung to the various peripheral tissues. The chain is Hemoglobin subunit alpha-A (HBAA) from Ara ararauna (Blue-and-yellow macaw).